The chain runs to 102 residues: Small ribosomal subunit protein uS10 (102 aa).

This sequence belongs to the universal ribosomal protein uS10 family. Part of the 30S ribosomal subunit.

In terms of biological role, involved in the binding of tRNA to the ribosomes. The protein is Small ribosomal subunit protein uS10 of Mesorhizobium japonicum (strain LMG 29417 / CECT 9101 / MAFF 303099) (Mesorhizobium loti (strain MAFF 303099)).